Consider the following 142-residue polypeptide: Large ribosomal subunit protein uL11 (142 aa).

This sequence belongs to the universal ribosomal protein uL11 family. As to quaternary structure, part of the ribosomal stalk of the 50S ribosomal subunit. Interacts with L10 and the large rRNA to form the base of the stalk. L10 forms an elongated spine to which L12 dimers bind in a sequential fashion forming a multimeric L10(L12)X complex. Post-translationally, one or more lysine residues are methylated.

Functionally, forms part of the ribosomal stalk which helps the ribosome interact with GTP-bound translation factors. The protein is Large ribosomal subunit protein uL11 of Acinetobacter baylyi (strain ATCC 33305 / BD413 / ADP1).